The chain runs to 308 residues: Ribosomal RNA small subunit methyltransferase H (308 aa).

S-adenosyl-L-methionine-binding positions include 34 to 36, Asp54, Phe85, Asp99, and Gln106; that span reads GGH.

It belongs to the methyltransferase superfamily. RsmH family.

The protein localises to the cytoplasm. The enzyme catalyses cytidine(1402) in 16S rRNA + S-adenosyl-L-methionine = N(4)-methylcytidine(1402) in 16S rRNA + S-adenosyl-L-homocysteine + H(+). Specifically methylates the N4 position of cytidine in position 1402 (C1402) of 16S rRNA. The chain is Ribosomal RNA small subunit methyltransferase H from Dichelobacter nodosus (strain VCS1703A).